The sequence spans 147 residues: Large ribosomal subunit protein uL13 (147 aa).

This sequence belongs to the universal ribosomal protein uL13 family. In terms of assembly, part of the 50S ribosomal subunit.

In terms of biological role, this protein is one of the early assembly proteins of the 50S ribosomal subunit, although it is not seen to bind rRNA by itself. It is important during the early stages of 50S assembly. The chain is Large ribosomal subunit protein uL13 from Nocardioides sp. (strain ATCC BAA-499 / JS614).